Reading from the N-terminus, the 349-residue chain is 26S proteasome non-ATPase regulatory subunit 4 (349 aa).

A VWFA domain is found at 5 to 188; the sequence is ATIVCLDNSE…LSDIILQSPI (184 aa). Residues 204–223 form the UIM 1 domain; sequence DTDPDLAMALKLSLEEEKQR. The segment covering 219–234 has biased composition (basic and acidic residues); that stretch reads EEKQRQERERKAREEA. 2 disordered regions span residues 219 to 257 and 274 to 349; these read EEKQ…MDVN and TDKM…NEKK. Positions 235–253 are enriched in low complexity; sequence NGGSTNSGTTTTTAPTESN. In terms of domain architecture, UIM 2 spans 259–278; it reads EDDPELAEALALSMATDKME. Residues 280–301 are compositionally biased toward low complexity; that stretch reads QSSTTNTDSQPPQQQQQPPTDD. The segment covering 335 to 349 has biased composition (basic and acidic residues); that stretch reads LSKKDEDKDKDNEKK.

Belongs to the proteasome subunit S5A family. As to quaternary structure, the 26S proteasome is composed of a core protease, known as the 20S proteasome, capped at one or both ends by the 19S regulatory complex (RC). The RC is composed of at least 18 different subunits in two subcomplexes, the base and the lid, which form the portions proximal and distal to the 20S proteolytic core, respectively.

In terms of biological role, binds and presumably selects ubiquitin-conjugates for destruction. The chain is 26S proteasome non-ATPase regulatory subunit 4 (psmD4) from Dictyostelium discoideum (Social amoeba).